The primary structure comprises 1000 residues: Bifunctional glutamine synthetase adenylyltransferase/adenylyl-removing enzyme (1000 aa).

The segment at 1 to 481 (MTAPGRRSST…LHEKLFYRPL (481 aa)) is adenylyl removase. The tract at residues 487-1000 (QLAPGEARLS…AVVDEQFYGA (514 aa)) is adenylyl transferase.

The protein belongs to the GlnE family. The cofactor is Mg(2+).

The catalysed reaction is [glutamine synthetase]-O(4)-(5'-adenylyl)-L-tyrosine + phosphate = [glutamine synthetase]-L-tyrosine + ADP. It catalyses the reaction [glutamine synthetase]-L-tyrosine + ATP = [glutamine synthetase]-O(4)-(5'-adenylyl)-L-tyrosine + diphosphate. In terms of biological role, involved in the regulation of glutamine synthetase GlnA, a key enzyme in the process to assimilate ammonia. When cellular nitrogen levels are high, the C-terminal adenylyl transferase (AT) inactivates GlnA by covalent transfer of an adenylyl group from ATP to specific tyrosine residue of GlnA, thus reducing its activity. Conversely, when nitrogen levels are low, the N-terminal adenylyl removase (AR) activates GlnA by removing the adenylyl group by phosphorolysis, increasing its activity. The regulatory region of GlnE binds the signal transduction protein PII (GlnB) which indicates the nitrogen status of the cell. The protein is Bifunctional glutamine synthetase adenylyltransferase/adenylyl-removing enzyme of Streptomyces avermitilis (strain ATCC 31267 / DSM 46492 / JCM 5070 / NBRC 14893 / NCIMB 12804 / NRRL 8165 / MA-4680).